The primary structure comprises 419 residues: Lipoyl synthase, mitochondrial (419 aa).

The transit peptide at 1–26 directs the protein to the mitochondrion; that stretch reads MAVCAGRLKCFGNPAVSLRTAASRAY. Positions 28-47 are enriched in low complexity; the sequence is TTTSPDPAIPSSSSASSSSA. The segment at 28 to 61 is disordered; it reads TTTSPDPAIPSSSSASSSSALPKRPQTSFRDKLN. 7 residues coordinate [4Fe-4S] cluster: Cys-136, Cys-141, Cys-147, Cys-167, Cys-171, Cys-174, and Ser-382. Residues 150–371 form the Radical SAM core domain; that stretch reads GSSKSAATAT…KDRALEMGFL (222 aa). A disordered region spans residues 399 to 419; sequence AESTGPESTNVPNVTPDAIVR.

It belongs to the radical SAM superfamily. Lipoyl synthase family. [4Fe-4S] cluster is required as a cofactor.

It is found in the mitochondrion. The catalysed reaction is [[Fe-S] cluster scaffold protein carrying a second [4Fe-4S](2+) cluster] + N(6)-octanoyl-L-lysyl-[protein] + 2 oxidized [2Fe-2S]-[ferredoxin] + 2 S-adenosyl-L-methionine + 4 H(+) = [[Fe-S] cluster scaffold protein] + N(6)-[(R)-dihydrolipoyl]-L-lysyl-[protein] + 4 Fe(3+) + 2 hydrogen sulfide + 2 5'-deoxyadenosine + 2 L-methionine + 2 reduced [2Fe-2S]-[ferredoxin]. It functions in the pathway protein modification; protein lipoylation via endogenous pathway; protein N(6)-(lipoyl)lysine from octanoyl-[acyl-carrier-protein]: step 2/2. Catalyzes the radical-mediated insertion of two sulfur atoms into the C-6 and C-8 positions of the octanoyl moiety bound to the lipoyl domains of lipoate-dependent enzymes, thereby converting the octanoylated domains into lipoylated derivatives. In Coccidioides posadasii (strain C735) (Valley fever fungus), this protein is Lipoyl synthase, mitochondrial.